A 526-amino-acid polypeptide reads, in one-letter code: Nucleolar complex protein 4 homolog A (526 aa).

The next 3 helical transmembrane spans lie at 307 to 327 (AAYDVGGAISLLALNGLFILI), 358 to 378 (FFHLANMFLSSTHLPVYLVAA), and 386 to 406 (LALTAPPQVLLMIIPFICNLI).

Belongs to the CBF/MAK21 family.

The protein resides in the nucleus membrane. The protein localises to the nucleus. It localises to the nucleolus. This is Nucleolar complex protein 4 homolog A (noc4l-a) from Xenopus laevis (African clawed frog).